Consider the following 257-residue polypeptide: Zinc-finger homeodomain protein 6 (257 aa).

The disordered stretch occupies residues 1 to 35; sequence MEFRGHDEPVDEMGVAYGRTPPSSSSSPAASASAG. A compositionally biased stretch (low complexity) spans 21 to 35; it reads PPSSSSSPAASASAG. The ZF-HD dimerization-type; degenerate zinc finger occupies 45–93; that stretch reads YHECLRNHAAAMGGHVVDGCGEFMPMPGDAADALKCAACGCHRSFHRKD. Positions 106–125 are enriched in pro residues; sequence PSPPTPRVPLLMPPPQPQPH. 2 disordered regions span residues 106–182 and 228–257; these read PSPP…TKFT and NNKS…QQQQ. The span at 141–155 shows a compositional bias: low complexity; sequence YHHTPSGSGGTTTES. The homeobox DNA-binding region spans 174–237; that stretch reads RKRFRTKFTP…NNKSSIGSSS (64 aa). Residues 242-257 are compositionally biased toward low complexity; it reads RRQPQEQQSQQQQQQQ.

As to quaternary structure, homo- and heterodimer with other ZFHD proteins.

The protein localises to the nucleus. Putative transcription factor. The polypeptide is Zinc-finger homeodomain protein 6 (ZHD6) (Oryza sativa subsp. indica (Rice)).